Reading from the N-terminus, the 493-residue chain is Kelch-like protein 42 (493 aa).

Residues 5 to 77 form the BTB domain; that stretch reads EMVQIRLEDR…INAGGAREGW (73 aa). 6 Kelch repeats span residues 183-241, 242-289, 291-332, 334-379, 381-436, and 438-487; these read VLVA…ILDN, YLFI…AVNS, LYAI…ECKG, IYVI…SVEE, IYIV…ALHN, and GIYI…SLYL.

Component of the BCR(KLHL42) E3 ubiquitin ligase complex, at least composed of CUL3 and KLHL42. Interacts (via the BTB domain) with CUL3. Interacts (via the kelch domains) with KATNA1.

The protein localises to the cytoplasm. The protein resides in the cytoskeleton. It localises to the spindle. Its pathway is protein modification; protein ubiquitination. Functionally, substrate-specific adapter of a BCR (BTB-CUL3-RBX1) E3 ubiquitin-protein ligase complex required for mitotic progression and cytokinesis. The BCR(KLHL42) E3 ubiquitin ligase complex mediates the ubiquitination and subsequent degradation of KATNA1. Involved in microtubule dynamics throughout mitosis. The chain is Kelch-like protein 42 (Klhl42) from Mus musculus (Mouse).